Consider the following 214-residue polypeptide: Probable transaldolase (214 aa).

Lys-83 (schiff-base intermediate with substrate) is an active-site residue.

This sequence belongs to the transaldolase family. Type 3B subfamily.

The protein resides in the cytoplasm. It catalyses the reaction D-sedoheptulose 7-phosphate + D-glyceraldehyde 3-phosphate = D-erythrose 4-phosphate + beta-D-fructose 6-phosphate. Its pathway is carbohydrate degradation; pentose phosphate pathway; D-glyceraldehyde 3-phosphate and beta-D-fructose 6-phosphate from D-ribose 5-phosphate and D-xylulose 5-phosphate (non-oxidative stage): step 2/3. Transaldolase is important for the balance of metabolites in the pentose-phosphate pathway. The polypeptide is Probable transaldolase (Carboxydothermus hydrogenoformans (strain ATCC BAA-161 / DSM 6008 / Z-2901)).